The chain runs to 513 residues: Pantetheinase (513 aa).

A signal peptide spans 1-22 (MITSPLLAYVAILFFCVLKASS). The CN hydrolase domain maps to 40–307 (APLTPVSHEE…GKLLLSQLDS (268 aa)). The Proton acceptor role is filled by Glu-80. Residue Asn-147 is glycosylated (N-linked (GlcNAc...) asparagine). Lys-179 functions as the Proton donor in the catalytic mechanism. Cys-212 (nucleophile) is an active-site residue. 2 N-linked (GlcNAc...) asparagine glycosylation sites follow: Asn-315 and Asn-353. Gly-487 carries the GPI-anchor amidated glycine lipid modification. Residues 488-513 (ASADLVAQGLRVMLGVIITIMYSLSW) constitute a propeptide, removed in mature form.

This sequence belongs to the carbon-nitrogen hydrolase superfamily. BTD/VNN family. As to quaternary structure, monomer. As to expression, detected in kidney (at protein level).

The protein resides in the cell membrane. The catalysed reaction is (R)-pantetheine + H2O = cysteamine + (R)-pantothenate. In terms of biological role, amidohydrolase that hydrolyzes specifically one of the carboamide linkages in D-pantetheine thus recycling pantothenic acid (vitamin B5) and releasing cysteamine. The polypeptide is Pantetheinase (VNN1) (Sus scrofa (Pig)).